We begin with the raw amino-acid sequence, 245 residues long: Orotidine 5'-phosphate decarboxylase (245 aa).

Substrate-binding positions include Asp-22, Lys-44, 71–80, Thr-131, Arg-192, Gln-201, Gly-221, and Arg-222; that span reads DLKFHDIPNT. The active-site Proton donor is Lys-73.

It belongs to the OMP decarboxylase family. Type 1 subfamily. In terms of assembly, homodimer.

The catalysed reaction is orotidine 5'-phosphate + H(+) = UMP + CO2. Its pathway is pyrimidine metabolism; UMP biosynthesis via de novo pathway; UMP from orotate: step 2/2. Functionally, catalyzes the decarboxylation of orotidine 5'-monophosphate (OMP) to uridine 5'-monophosphate (UMP). The chain is Orotidine 5'-phosphate decarboxylase from Escherichia coli O6:K15:H31 (strain 536 / UPEC).